The following is a 1088-amino-acid chain: DNA ligase 4 (1088 aa).

Disordered regions lie at residues 1 to 56 (MALS…KFND) and 73 to 117 (TTTT…TTTT). 2 stretches are compositionally biased toward low complexity: residues 25–53 (DFKN…YNNK) and 73–90 (TTTT…INKT). A compositionally biased stretch (acidic residues) spans 95–105 (DDIFDDEDEDS). Residues glutamate 414, lysine 416, arginine 421, glutamate 467, phenylalanine 514, glutamate 574, lysine 579, lysine 596, and lysine 598 each contribute to the ATP site. The active-site N6-AMP-lysine intermediate is the lysine 416. Glutamate 467 provides a ligand contact to Mg(2+). Mg(2+) is bound at residue glutamate 574. 2 BRCT domains span residues 827–917 (PTQN…PKYM) and 984–1088 (CWWS…EILD).

The protein belongs to the ATP-dependent DNA ligase family. It depends on Mg(2+) as a cofactor.

The protein localises to the nucleus. It catalyses the reaction ATP + (deoxyribonucleotide)n-3'-hydroxyl + 5'-phospho-(deoxyribonucleotide)m = (deoxyribonucleotide)n+m + AMP + diphosphate.. In terms of biological role, DNA ligase involved in DNA non-homologous end joining (NHEJ); required for double-strand break (DSB) repair. This Dictyostelium discoideum (Social amoeba) protein is DNA ligase 4 (lig4).